Here is a 101-residue protein sequence, read N- to C-terminus: MSMEKMGKVEEHFQRALELKKMVHRWRNSHTHCLWQITLSQRRNPYAILRMQDTMVQELALANKQLLMVRQAALHQLFEKEHQQYQQELNEKGKAFYMERL.

In terms of assembly, microtubule inner protein component of sperm flagellar doublet microtubules. In terms of tissue distribution, expressed in trachea multiciliated cells.

The protein localises to the cytoplasm. It is found in the cytoskeleton. The protein resides in the cilium axoneme. Its subcellular location is the flagellum axoneme. Its function is as follows. Microtubule inner protein (MIP) part of the dynein-decorated doublet microtubules (DMTs) in cilia axoneme, which is required for motile cilia beating. The protein is Cilia- and flagella-associated protein 141 of Bos taurus (Bovine).